The primary structure comprises 1465 residues: Vacuolar heme ABC transmembrane exporter abc3 (1465 aa).

The Extracellular segment spans residues 1-8 (MITANKGL). Residues 9–29 (SLVLLIPNLFALVSGGLQYVF) form a helical membrane-spanning segment. The Cytoplasmic portion of the chain corresponds to 30 to 42 (DVRRRIFRPHFSQ). Residues 43–63 (FWTIWMKFFSIALVIITQIYV) form a helical membrane-spanning segment. Residues 64–69 (GYKTKN) lie on the Extracellular side of the membrane. Residues 70–90 (IGWNFFSVVTYCFVLFLQFAE) traverse the membrane as a helical segment. The Cytoplasmic portion of the chain corresponds to 91 to 97 (QSTLRVP). Residues 98–118 (MASLLIFWLLKVVTSLLILLF) traverse the membrane as a helical segment. At 119–129 (SPYIAITSMAR) the chain is on the extracellular side. The helical transmembrane segment at 130–150 (LLTLITLFCSLVCFISEVYVP) threads the bilayer. Position 151-152 (151-152 (PC)) interacts with heme. The Cytoplasmic segment spans residues 151-235 (PCNRVWYSDD…IYHSKNKRRS (85 aa)). A helical membrane pass occupies residues 236–256 (LFLWKLLFFNHWKLVALITIT). Positions 250–539 (VALITITKLI…LPTVISSLLE (290 aa)) constitute an ABC transmembrane type-1 1 domain. Residues 257 to 291 (KLIQDVLAFVQPTLIQKTILFISSYTSPNPESPSR) are Extracellular-facing. A helical membrane pass occupies residues 292-312 (GFIIAILVLVANFLQTLLLQQ). Over 313–362 (YNQLIMLLGMRWKTELLASIYRKSLLLSSSARQNRSIGDIINYMAVDTQK) the chain is Cytoplasmic. The helical transmembrane segment at 363–383 (ISDLPIYLFIIVSGPFQIALA) threads the bilayer. The Extracellular segment spans residues 384–394 (LSNLYHLMGYS). The helical transmembrane segment at 395-415 (AFTGVAASVILFPCNIIVANV) threads the bilayer. Over 416 to 480 (YKKFQSILMK…KIGFITAIGD (65 aa)) the chain is Cytoplasmic. Residues 481-501 (FAWIFTTIIVTTVAFGAFIIF) form a helical membrane-spanning segment. Residues 502–511 (HGKTQALTAD) are Extracellular-facing. The helical transmembrane segment at 512–532 (IVFPAVSLFNLLQFPLAMLPT) threads the bilayer. The Cytoplasmic portion of the chain corresponds to 533 to 899 (VISSLLEASV…VYWMYFKSCS (367 aa)). The ABC transporter 1 domain maps to 575 to 804 (LEIKSGTFSW…TNSELKQQLS (230 aa)). 614-621 (GKVGAGKS) contacts ATP. Disordered regions lie at residues 805–824 (EFND…SYPS) and 840–869 (TYSS…TEDD). Residues 900 to 920 (IGLILLYFFFIISGIMMNVAT) traverse the membrane as a helical segment. In terms of domain architecture, ABC transmembrane type-1 2 spans 903 to 1189 (ILLYFFFIIS…IVQQSVDAEN (287 aa)). Over 921–939 (NVWLKHWSEENGKSSSELN) the chain is Extracellular. The helical transmembrane segment at 940–960 (PSPYFYLGIYLFFGFLSCAFI) threads the bilayer. At 961–1033 (SSSSLTMTVL…FFFRNSIQVL (73 aa)) the chain is on the cytoplasmic side. The helical transmembrane segment at 1034-1054 (FILGVICYSAPLSLLLIVPLF) threads the bilayer. Residues 1055-1465 (FLYLYNRAYY…YSLAKESGLI (411 aa)) are Extracellular-facing. Residues 1226–1460 (VSFNHYSAKY…KDSMFYSLAK (235 aa)) form the ABC transporter 2 domain. 1260–1267 (GRTGAGKS) contacts ATP.

Belongs to the ABC transporter superfamily.

The protein resides in the vacuole membrane. In terms of biological role, iron-regulated vacuolar transporter that mobilizes stored heme from the vacuole to the cytosol in response to iron deficiency. This is Vacuolar heme ABC transmembrane exporter abc3 from Schizosaccharomyces pombe (strain 972 / ATCC 24843) (Fission yeast).